Consider the following 99-residue polypeptide: Large ribosomal subunit protein bL21 (99 aa).

Belongs to the bacterial ribosomal protein bL21 family. In terms of assembly, part of the 50S ribosomal subunit. Contacts protein L20.

This protein binds to 23S rRNA in the presence of protein L20. The chain is Large ribosomal subunit protein bL21 from Acholeplasma laidlawii (strain PG-8A).